Consider the following 86-residue polypeptide: uncharacterized protein (86 aa).

The N-terminal stretch at methionine 1 to alanine 25 is a signal peptide.

This is an uncharacterized protein from Bacillus subtilis (strain 168).